The primary structure comprises 91 residues: Potassium channel toxin BmTXK-beta-2 (91 aa).

Positions 1-19 are cleaved as a signal peptide; sequence MQRNLVVLLFLGMVALSSC. The propeptide occupies 20-27; sequence GLREKHFQ. Residues 54-91 enclose the BetaSPN-type CS-alpha/beta domain; that stretch reads QFGCPAYQGYCDDHCQDIKKEEGFCHGFKCKCGIPMGF. 3 cysteine pairs are disulfide-bonded: Cys57–Cys78, Cys64–Cys83, and Cys68–Cys85.

It belongs to the long chain scorpion toxin family. Class 1 subfamily. Expressed by the venom gland.

It is found in the secreted. Functionally, inhibits voltage-gated potassium channel. This chain is Potassium channel toxin BmTXK-beta-2, found in Olivierus martensii (Manchurian scorpion).